The primary structure comprises 74 residues: Delta-stichotoxin-Sgt2a (74 aa).

Positions 1–19 (MNRLIILVFAAVFLTLASA) are cleaved as a signal peptide. Residues 20–28 (EVSEDVNMA) constitute a propeptide that is removed on maturation. Intrachain disulfides connect C34/C71, C36/C64, and C57/C72.

It belongs to the sea anemone sodium channel inhibitory toxin family. Type I subfamily.

The protein localises to the secreted. It is found in the nematocyst. Functionally, binds specifically to voltage-gated sodium channels (Nav), thereby delaying their inactivation during signal transduction. This Stichodactyla gigantea (Giant carpet anemone) protein is Delta-stichotoxin-Sgt2a.